The sequence spans 875 residues: Outer membrane usher protein FocD (875 aa).

Positions 1–38 (MFFGDGGQLLSDKSLTGSAGGGNNRMKFNILPLAFFIG) are cleaved as a signal peptide. A disulfide bridge connects residues Cys-852 and Cys-874.

It belongs to the fimbrial export usher family.

It is found in the cell outer membrane. Functionally, involved in the export and assembly of the F1C fimbriae subunits across the outer membrane. This Escherichia coli protein is Outer membrane usher protein FocD (focD).